The primary structure comprises 655 residues: RNA-binding protein EWS (655 aa).

Residues Met-1–Phe-285 are EAD (Gln/Pro/Thr-rich). Tandem repeats lie at residues Thr-8–Gln-16, Gly-17–Gln-27, Gly-28–Gln-34, Ala-35–Gly-42, Thr-43–Val-50, Ser-51–Ala-59, Thr-60–Thr-68, Ser-69–Thr-75, Gly-76–Gln-84, Ala-85–Gln-91, Gly-92–Ala-110, Ser-111–Thr-116, Ala-117–Pro-125, Thr-126–Gly-156, Gly-157–Leu-163, Gly-164–Tyr-170, Ser-171–Gly-177, Ser-178–Pro-188, Ser-189–Thr-193, Ser-194–Thr-201, Ser-202–Ser-206, Ser-207–Asn-212, Thr-213–Ser-218, Ser-219–Ser-224, Ser-225–Ser-230, Ser-231–Thr-238, Ser-239–Gly-245, Ser-246–Ser-252, Gln-253–Ser-259, Ser-260–Gly-276, and Val-277–Phe-285. The segment at Thr-8–Phe-285 is 31 X approximate tandem repeats. The disordered stretch occupies residues Gln-121 to Pro-350. Polar residues-rich tracts occupy residues Tyr-127–Thr-137 and Ala-146–Tyr-172. Low complexity predominate over residues Pro-192–Ser-266. The IQ domain maps to Gln-256–Phe-285. Ser-266 is modified (phosphoserine; by PKC). Asymmetric dimethylarginine is present on residues Arg-300, Arg-302, Arg-304, Arg-309, Arg-314, Arg-317, and Arg-321. A compositionally biased stretch (gly residues) spans Asp-308 to Lys-334. Residues Pro-335–Pro-350 show a composition bias toward low complexity. The RRM domain maps to Ser-360–Lys-446. Lys-438 carries the post-translational modification N6-acetyllysine. 2 disordered regions span residues Lys-447–Pro-524 and Ala-544–Tyr-655. Asymmetric dimethylarginine occurs at positions 454 and 463. The residue at position 470 (Arg-470) is an Asymmetric dimethylarginine; alternate. At Arg-470 the chain carries Omega-N-methylarginine; alternate. Residues Gly-471–Arg-489 show a composition bias toward gly residues. Position 485 is an omega-N-methylarginine (Arg-485). The residue at position 489 (Arg-489) is an Asymmetric dimethylarginine; by PRMT8. Asymmetric dimethylarginine occurs at positions 493, 499, and 502. Arg-505 bears the Asymmetric dimethylarginine; alternate mark. Arg-505 is subject to Omega-N-methylarginine; alternate. Residues Arg-517–Glu-548 form a RanBP2-type zinc finger. Residues Phe-550 to Gly-559 show a composition bias toward pro residues. Asymmetric dimethylarginine is present on residues Arg-562 and Arg-564. Residues Gly-565–Gly-590 are compositionally biased toward gly residues. Arg-571 is subject to Asymmetric dimethylarginine; alternate; by PRMT8. Arg-571 bears the Omega-N-methylarginine; alternate; by PRMT8 mark. Residues Arg-574, Arg-580, Arg-588, and Arg-591 each carry the asymmetric dimethylarginine modification. The segment covering Arg-591–Asp-605 has biased composition (basic and acidic residues). Arg-595 carries the post-translational modification Asymmetric dimethylarginine; alternate; by PRMT8. Residue Arg-595 is modified to Omega-N-methylarginine; alternate; by PRMT8. The residue at position 599 (Arg-599) is an Asymmetric dimethylarginine. Arg-602 carries the post-translational modification Asymmetric dimethylarginine; by PRMT8. Position 606 is an asymmetric dimethylarginine; alternate; by PRMT8 (Arg-606). Omega-N-methylarginine; alternate; by PRMT8 is present on Arg-606. Residues Arg-606–Pro-617 show a composition bias toward gly residues. The residue at position 614 (Arg-614) is an Asymmetric dimethylarginine; alternate. At Arg-614 the chain carries Omega-N-methylarginine; alternate. Arg-632 and Arg-635 each carry asymmetric dimethylarginine. The Nuclear localization signal motif lies at Pro-638–Tyr-655. Residues Lys-640–Tyr-655 are compositionally biased toward basic and acidic residues.

Belongs to the RRM TET family. As to quaternary structure, binds RNA, POLR2C, SF1 and calmodulin. Interacts with PTK2B and TDRD3. Forms a complex with REC8, PRDM9, SYCP3 and SYCP1; complex formation is dependent of phosphorylated form of REC8 and requires PRDM9 bound to hotspot DNA; EWSR1 joins PRDM9 with the chromosomal axis through REC8. In terms of processing, phosphorylated; calmodulin-binding inhibits phosphorylation of Ser-266. Highly methylated on arginine residues. Methylation is mediated by PRMT1 and, at lower level by PRMT8.

The protein localises to the nucleus. Its subcellular location is the cytoplasm. The protein resides in the cell membrane. Functionally, binds to ssRNA containing the consensus sequence 5'-AGGUAA-3'. Might function as a transcriptional repressor. In Mus musculus (Mouse), this protein is RNA-binding protein EWS (Ewsr1).